The sequence spans 496 residues: Maturase K (496 aa).

It belongs to the intron maturase 2 family. MatK subfamily.

It is found in the plastid. Its subcellular location is the chloroplast. Usually encoded in the trnK tRNA gene intron. Probably assists in splicing its own and other chloroplast group II introns. The protein is Maturase K of Paeonia officinalis (Common peony).